The sequence spans 122 residues: Histone H2B, gonadal (122 aa).

Positions 1 to 31 (MPPKVSSKGAKKAGKAKAARSGDKKRKRRRK) are disordered. Basic residues predominate over residues 9–31 (GAKKAGKAKAARSGDKKRKRRRK). An O-linked (GlcNAc) serine glycan is attached at Ser109. A Glycyl lysine isopeptide (Lys-Gly) (interchain with G-Cter in ubiquitin) cross-link involves residue Lys117.

Belongs to the histone H2B family. The nucleosome is a histone octamer containing two molecules each of H2A, H2B, H3 and H4 assembled in one H3-H4 heterotetramer and two H2A-H2B heterodimers. The octamer wraps approximately 147 bp of DNA. Post-translationally, monoubiquitination of Lys-117 gives a specific tag for epigenetic transcriptional activation and is also prerequisite for histone H3 'Lys-4' and 'Lys-79' methylation. GlcNAcylation at Ser-109 promotes monoubiquitination of Lys-117. It fluctuates in response to extracellular glucose, and associates with transcribed genes.

The protein localises to the nucleus. It is found in the chromosome. Its function is as follows. Core component of nucleosome. Nucleosomes wrap and compact DNA into chromatin, limiting DNA accessibility to the cellular machineries which require DNA as a template. Histones thereby play a central role in transcription regulation, DNA repair, DNA replication and chromosomal stability. DNA accessibility is regulated via a complex set of post-translational modifications of histones, also called histone code, and nucleosome remodeling. In Patella granatina (Sandpaper limpet), this protein is Histone H2B, gonadal.